Here is a 64-residue protein sequence, read N- to C-terminus: Large ribosomal subunit protein bL35 (64 aa).

It belongs to the bacterial ribosomal protein bL35 family.

The sequence is that of Large ribosomal subunit protein bL35 from Levilactobacillus brevis (strain ATCC 367 / BCRC 12310 / CIP 105137 / JCM 1170 / LMG 11437 / NCIMB 947 / NCTC 947) (Lactobacillus brevis).